A 278-amino-acid polypeptide reads, in one-letter code: DNA-directed RNA polymerase subunit alpha (278 aa).

The protein belongs to the RNA polymerase alpha chain family. In terms of assembly, in plastids the minimal PEP RNA polymerase catalytic core is composed of four subunits: alpha, beta, beta', and beta''. When a (nuclear-encoded) sigma factor is associated with the core the holoenzyme is formed, which can initiate transcription.

Its subcellular location is the plastid. The protein localises to the chloroplast. It catalyses the reaction RNA(n) + a ribonucleoside 5'-triphosphate = RNA(n+1) + diphosphate. Functionally, DNA-dependent RNA polymerase catalyzes the transcription of DNA into RNA using the four ribonucleoside triphosphates as substrates. The chain is DNA-directed RNA polymerase subunit alpha (rpoA) from Chlorella vulgaris (Green alga).